The sequence spans 403 residues: Arginine biosynthesis bifunctional protein ArgJ (403 aa).

A compositionally biased stretch (polar residues) spans 1–11; sequence MVQSVLSSTSH. Residues 1–21 are disordered; the sequence is MVQSVLSSTSHGSERADMSAA. The substrate site is built by Thr-161, Lys-183, Thr-194, Glu-273, Asn-398, and Thr-403. The active-site Nucleophile is Thr-194.

This sequence belongs to the ArgJ family. In terms of assembly, heterotetramer of two alpha and two beta chains.

It localises to the cytoplasm. It carries out the reaction N(2)-acetyl-L-ornithine + L-glutamate = N-acetyl-L-glutamate + L-ornithine. It catalyses the reaction L-glutamate + acetyl-CoA = N-acetyl-L-glutamate + CoA + H(+). It functions in the pathway amino-acid biosynthesis; L-arginine biosynthesis; L-ornithine and N-acetyl-L-glutamate from L-glutamate and N(2)-acetyl-L-ornithine (cyclic): step 1/1. The protein operates within amino-acid biosynthesis; L-arginine biosynthesis; N(2)-acetyl-L-ornithine from L-glutamate: step 1/4. Its function is as follows. Catalyzes two activities which are involved in the cyclic version of arginine biosynthesis: the synthesis of N-acetylglutamate from glutamate and acetyl-CoA as the acetyl donor, and of ornithine by transacetylation between N(2)-acetylornithine and glutamate. The protein is Arginine biosynthesis bifunctional protein ArgJ of Rhodococcoides fascians (Rhodococcus fascians).